The sequence spans 169 residues: Adenine phosphoribosyltransferase (169 aa).

It belongs to the purine/pyrimidine phosphoribosyltransferase family. In terms of assembly, homodimer.

Its subcellular location is the cytoplasm. The catalysed reaction is AMP + diphosphate = 5-phospho-alpha-D-ribose 1-diphosphate + adenine. It functions in the pathway purine metabolism; AMP biosynthesis via salvage pathway; AMP from adenine: step 1/1. In terms of biological role, catalyzes a salvage reaction resulting in the formation of AMP, that is energically less costly than de novo synthesis. This is Adenine phosphoribosyltransferase from Mycoplasmopsis synoviae (strain 53) (Mycoplasma synoviae).